The sequence spans 231 residues: Large ribosomal subunit protein uL5m (231 aa).

It belongs to the universal ribosomal protein uL5 family.

Its subcellular location is the mitochondrion. This chain is Large ribosomal subunit protein uL5m (RPL5), found in Prototheca wickerhamii.